We begin with the raw amino-acid sequence, 956 residues long: MSKKRLHEIAKEIGKSSKEVVERAKSLGLDVKSHASSVEEADANKIASSFSAGVTKNVQAGSAKDKQVAEQKAKAAKATTPQPAASKAAEKPAAATQEASQPVAVKPKSRNFKAEREARAKEQVARRQAGQNRSNDRKSDYRQLGRSQGQQTERAGHKSQNQQRDRRFDNRPSSGNNRNDGHRQAGNRDKNRSFNANSRQQDTGRQGQTQAGAPKIDFKARAAALKAEQNAEYARQRESRFREQEEAKRLEQQARQEAKAAALKAQTEDKKHREASAKATESVASMAAASVAKPVDKRRKKQNRPDKGHDRDHGLEDGQKKNKKSWNSQNQVRNQKNSNWNNNKKNKKGKHHKNSNTAPKPVTERKFHELPKEFEYSEGMTVAEIAKRIKREPAEIVKKLFMMGVMATQNQSLDGDTIELLMVDYGIEAKAKVEVDEADIERFFTDDSYLNPENIVERAPVVTIMGHVDHGKTTLLDTLRNSRVATGEAGGITQHIGAYQIEEAGKKITFLDTPGHAAFTSMRARGASVTDITILIVAADDGVMPQTIEAINHSKAAGVPIIVAINKIDKPGANPERVISELAEHGIISTAWGGECEFVEISAKFNKNIDELLETVLLVAEVEELKADPTVRAIGTVIEARLDKGKGAVATLLVQQGTLHVQDPIVVGNTFGRVRAMTNDLGRRVKSAEPSTPVSITGLNETPMAGDHFAVYADEKAARAAGEERAKRALLKQRQNTQRVSLDNLFDTLKAGEIKTVNVIIKADVQGSVEALAASLLKIDVEGVRVNVVHSAVGAINESDVTLAEASNAVIIGFNVRPTPQARQQADTDDVEIRLHSIIYKVIEEVEEAMKGKLDPEYQEKMLGEAIIRETFKVSKVGTIGGFMVVNGKVTRDSSVRVIRDSVVIFDGKLASLKHYKDDVKEIGNAQEGGLMIEGFNDIKVDDTIEAYVMEEITRK.

The tract at residues 33–370 (SHASSVEEAD…PVTERKFHEL (338 aa)) is disordered. Over residues 46-60 (IASSFSAGVTKNVQA) the composition is skewed to polar residues. Residues 63–73 (AKDKQVAEQKA) show a composition bias toward basic and acidic residues. Residues 76-100 (AKATTPQPAASKAAEKPAAATQEAS) are compositionally biased toward low complexity. Basic and acidic residues-rich tracts occupy residues 112–125 (FKAEREARAKEQVA), 134–143 (SNDRKSDYRQ), and 179–192 (NDGHRQAGNRDKNR). Low complexity predominate over residues 199–213 (RQQDTGRQGQTQAGA). 2 stretches are compositionally biased toward basic and acidic residues: residues 234-258 (ARQRESRFREQEEAKRLEQQARQEA) and 266-276 (QTEDKKHREAS). Residues 277–293 (AKATESVASMAAASVAK) show a composition bias toward low complexity. The span at 303 to 320 (NRPDKGHDRDHGLEDGQK) shows a compositional bias: basic and acidic residues. Low complexity predominate over residues 325–343 (SWNSQNQVRNQKNSNWNNN). Residues 344 to 354 (KKNKKGKHHKN) show a composition bias toward basic residues. The tr-type G domain maps to 457–626 (ERAPVVTIMG…LLVAEVEELK (170 aa)). The tract at residues 466-473 (GHVDHGKT) is G1. 466-473 (GHVDHGKT) contributes to the GTP binding site. The G2 stretch occupies residues 491–495 (GITQH). Residues 512 to 515 (DTPG) are G3. GTP contacts are provided by residues 512–516 (DTPGH) and 566–569 (NKID). The interval 566–569 (NKID) is G4. Residues 602–604 (SAK) are G5.

It belongs to the TRAFAC class translation factor GTPase superfamily. Classic translation factor GTPase family. IF-2 subfamily.

The protein resides in the cytoplasm. Its function is as follows. One of the essential components for the initiation of protein synthesis. Protects formylmethionyl-tRNA from spontaneous hydrolysis and promotes its binding to the 30S ribosomal subunits. Also involved in the hydrolysis of GTP during the formation of the 70S ribosomal complex. The chain is Translation initiation factor IF-2 from Streptococcus equi subsp. equi (strain 4047).